Reading from the N-terminus, the 115-residue chain is Viral Lymphotactin (115 aa).

The N-terminal stretch at 1–19 (MRLLTILALCCVAIWVVES) is a signal peptide. A disulfide bond links cysteine 30 and cysteine 67.

The protein belongs to the intercrine gamma family. Interacts with host XCR1. N-glycosylated and O-glycosylated.

The protein localises to the secreted. Its function is as follows. Chemoattractant for CD4-dendritic cells, but not for CD4+ dendritic cells, T-cells or B-cells. The polypeptide is Viral Lymphotactin (vXCL1) (Rat cytomegalovirus (isolate England) (RCMV-E)).